The sequence spans 746 residues: Protein Niban 2 (746 aa).

A lipid anchor (N-myristoyl glycine) is attached at Gly-2. The PH domain occupies Arg-68–Arg-192. Phosphoserine occurs at positions 568, 574, 601, and 603. A disordered region spans residues Gly-590–Phe-746. Position 606 is a phosphothreonine (Thr-606). Residues Ser-609, Ser-624, Ser-638, Ser-641, Ser-646, Ser-665, Ser-681, Ser-692, and Ser-696 each carry the phosphoserine modification. The segment covering Pro-671–Pro-693 has biased composition (low complexity). Polar residues predominate over residues Gly-720–Phe-746.

The protein belongs to the Niban family. Post-translationally, phosphorylated at Ser-641, Ser-646, Ser-692 and Ser-696 by the BRAF/MKK/ERK signaling cascade. In melanoma cells, the C-terminal phosphorylation may prevent targeting to the plasma membrane. As apoptosis proceeds, degraded via an proteasome-independent pathway, probably by caspases.

It localises to the cytoplasm. The protein resides in the cytosol. The protein localises to the cell junction. Its subcellular location is the adherens junction. It is found in the membrane. In terms of biological role, may play a role in apoptosis suppression. May promote melanoma cell invasion in vitro. This Homo sapiens (Human) protein is Protein Niban 2.